The primary structure comprises 254 residues: Tubulin-specific chaperone B (254 aa).

The 44-residue stretch at 182–225 folds into the CAP-Gly domain; it reads PLPLDVMGTWCGVEFPEAAGKNDGRINGVTLFGPVAPGHGSFVR. Positions 234–254 are disordered; the sequence is KDEESAEVEDVHDDVESDDEI. A compositionally biased stretch (acidic residues) spans 237 to 254; that stretch reads ESAEVEDVHDDVESDDEI.

The protein belongs to the TBCB family. Binds to monomeric alpha-tubulin.

The protein localises to the cytoplasm. The protein resides in the cytoskeleton. Functionally, acts to sequester alpha-tubulin from interaction with beta-tubulin, raising the possibility that it plays a regulatory role in the formation of the tubulin heterodimer. The polypeptide is Tubulin-specific chaperone B (ALF1) (Saccharomyces cerevisiae (strain ATCC 204508 / S288c) (Baker's yeast)).